The sequence spans 217 residues: EF-hand domain-containing protein D2 homolog (217 aa).

Residues 1-28 (MSVSSNASSASNKDSVDSPSSTTNTDSS) show a composition bias toward low complexity. The tract at residues 1–29 (MSVSSNASSASNKDSVDSPSSTTNTDSSE) is disordered. EF-hand domains follow at residues 69–104 (NQIKDYQKTFNTYDTARDGFLDLQELKFMMEKLGAP) and 105–140 (QTHLGLKQMIAEVDEDNDGKISFREFLLIFRKAQAG). Ca(2+) contacts are provided by Asp-82, Asp-86, Glu-93, Asp-118, Asp-120, Asp-122, Lys-124, and Glu-129. The segment covering 191-204 (EQEERRREEEERAQ) has biased composition (basic and acidic residues). The interval 191-217 (EQEERRREEEERAQRRQQFQQRAAIFQ) is disordered. Residues 206–217 (RQQFQQRAAIFQ) are compositionally biased toward low complexity.

The chain is EF-hand domain-containing protein D2 homolog (Swip-1) from Drosophila melanogaster (Fruit fly).